A 262-amino-acid chain; its full sequence is Indole-3-glycerol phosphate synthase (262 aa).

It belongs to the TrpC family.

It catalyses the reaction 1-(2-carboxyphenylamino)-1-deoxy-D-ribulose 5-phosphate + H(+) = (1S,2R)-1-C-(indol-3-yl)glycerol 3-phosphate + CO2 + H2O. Its pathway is amino-acid biosynthesis; L-tryptophan biosynthesis; L-tryptophan from chorismate: step 4/5. This chain is Indole-3-glycerol phosphate synthase, found in Chlorobium luteolum (strain DSM 273 / BCRC 81028 / 2530) (Pelodictyon luteolum).